A 269-amino-acid polypeptide reads, in one-letter code: tRNA pseudouridine synthase A (269 aa).

Aspartate 51 acts as the Nucleophile in catalysis. Substrate is bound at residue tyrosine 109.

It belongs to the tRNA pseudouridine synthase TruA family. Homodimer.

The enzyme catalyses uridine(38/39/40) in tRNA = pseudouridine(38/39/40) in tRNA. Formation of pseudouridine at positions 38, 39 and 40 in the anticodon stem and loop of transfer RNAs. The polypeptide is tRNA pseudouridine synthase A (Aeromonas salmonicida (strain A449)).